A 209-amino-acid polypeptide reads, in one-letter code: Large ribosomal subunit protein uL3 (209 aa).

Position 150 is an N5-methylglutamine (Gln150).

This sequence belongs to the universal ribosomal protein uL3 family. In terms of assembly, part of the 50S ribosomal subunit. Forms a cluster with proteins L14 and L19. Methylated by PrmB.

Functionally, one of the primary rRNA binding proteins, it binds directly near the 3'-end of the 23S rRNA, where it nucleates assembly of the 50S subunit. The protein is Large ribosomal subunit protein uL3 of Vibrio vulnificus (strain YJ016).